The following is a 301-amino-acid chain: Probable alpha-L-glutamate ligase 1 (301 aa).

The ATP-grasp domain occupies 104–287 (MQLMSRRGIG…VAGAIIEFVE (184 aa)). Residues lysine 141, 178–179 (EY), aspartate 187, and 211–213 (RSN) each bind ATP. Aspartate 248, glutamate 260, and asparagine 262 together coordinate Mg(2+). Positions 248, 260, and 262 each coordinate Mn(2+).

Belongs to the RimK family. Requires Mg(2+) as cofactor. Mn(2+) serves as cofactor.

The sequence is that of Probable alpha-L-glutamate ligase 1 from Shewanella putrefaciens (strain CN-32 / ATCC BAA-453).